Consider the following 1194-residue polypeptide: Peroxisomal ATPase PEX1 (1194 aa).

The disordered stretch occupies residues 220-255 (KTRQRRMSHQGKSVKAKSLASTRHGKRRDDGSGPSG). Basic residues predominate over residues 221–234 (TRQRRMSHQGKSVK). The AAA-cassette D1 stretch occupies residues 538–730 (RSASVLLTGA…GPEPTLKIEK (193 aa)). ATP contacts are provided by residues 546–553 (GARGSGKT) and 849–856 (GYPGCGKT). The AAA-cassette D2 stretch occupies residues 844 to 1028 (GLLLYGYPGC…LYNAHLEAIH (185 aa)). Disordered stretches follow at residues 1062–1084 (YISF…LTNG), 1116–1139 (QVQQ…EPVI), and 1174–1194 (RSGE…SSLM). The segment covering 1066–1084 (SMGNKDSTGEPSTQPLTNG) has biased composition (polar residues). Residues 1116 to 1127 (QVQQQQSQTNQA) are compositionally biased toward low complexity.

Belongs to the AAA ATPase family. Interacts with PEX6; forming the PEX1-PEX6 AAA ATPase complex, which is composed of a heterohexamer formed by a trimer of PEX1-PEX6 dimers.

Its subcellular location is the cytoplasm. The protein resides in the cytosol. It is found in the peroxisome membrane. It carries out the reaction ATP + H2O = ADP + phosphate + H(+). Its function is as follows. Component of the PEX1-PEX6 AAA ATPase complex, a protein dislocase complex that mediates the ATP-dependent extraction of the PEX5 receptor from peroxisomal membranes, an essential step for PEX5 recycling. Specifically recognizes PEX5 monoubiquitinated at 'Cys-6', and pulls it out of the peroxisome lumen through the PEX2-PEX10-PEX12 retrotranslocation channel. Extraction by the PEX1-PEX6 AAA ATPase complex is accompanied by unfolding of the TPR repeats and release of bound cargo from PEX5. Regulates autophagy and biogenesis of peroxisomes and Woronin bodies. Plays important roles in mycelial growth and development and stress response. Is also essential for conidiation and fatty acid utilization. Required for nematode predation via trap formation. The protein is Peroxisomal ATPase PEX1 of Arthrobotrys oligospora (strain ATCC 24927 / CBS 115.81 / DSM 1491) (Nematode-trapping fungus).